Consider the following 440-residue polypeptide: Argininosuccinate lyase (440 aa).

It belongs to the lyase 1 family. Argininosuccinate lyase subfamily.

The protein localises to the cytoplasm. The catalysed reaction is 2-(N(omega)-L-arginino)succinate = fumarate + L-arginine. It participates in amino-acid biosynthesis; L-arginine biosynthesis; L-arginine from L-ornithine and carbamoyl phosphate: step 3/3. The chain is Argininosuccinate lyase from Clostridium botulinum (strain Okra / Type B1).